A 216-amino-acid polypeptide reads, in one-letter code: Minor fimbrial subunit HifD (216 aa).

The first 19 residues, 1 to 19 (MQKTPKKLTALCHQQSTAS), serve as a signal peptide directing secretion. Cysteine 20 carries N-palmitoyl cysteine lipidation. A lipid anchor (S-diacylglycerol cysteine) is attached at cysteine 20. The tract at residues 159 to 180 (PINVDGSQANSEKAPDTGKEQN) is disordered.

The protein belongs to the fimbrial protein family.

It is found in the cell membrane. It localises to the fimbrium. In terms of biological role, may be a minor structural protein required for pilus biogenesis. The sequence is that of Minor fimbrial subunit HifD (hifD) from Haemophilus influenzae.